A 250-amino-acid chain; its full sequence is 5-oxoprolinase subunit A (250 aa).

This sequence belongs to the LamB/PxpA family. Forms a complex composed of PxpA, PxpB and PxpC.

It catalyses the reaction 5-oxo-L-proline + ATP + 2 H2O = L-glutamate + ADP + phosphate + H(+). Functionally, catalyzes the cleavage of 5-oxoproline to form L-glutamate coupled to the hydrolysis of ATP to ADP and inorganic phosphate. The protein is 5-oxoprolinase subunit A of Staphylococcus aureus (strain Mu3 / ATCC 700698).